A 264-amino-acid chain; its full sequence is Thymidylate synthase (264 aa).

Arginine 21 provides a ligand contact to dUMP. Histidine 51 provides a ligand contact to (6R)-5,10-methylene-5,6,7,8-tetrahydrofolate. 126-127 (RR) is a binding site for dUMP. Cysteine 146 functions as the Nucleophile in the catalytic mechanism. DUMP contacts are provided by residues 166–169 (RSAD), asparagine 177, and 207–209 (HLY). Aspartate 169 is a (6R)-5,10-methylene-5,6,7,8-tetrahydrofolate binding site. Alanine 263 is a (6R)-5,10-methylene-5,6,7,8-tetrahydrofolate binding site.

It belongs to the thymidylate synthase family. Bacterial-type ThyA subfamily. As to quaternary structure, homodimer.

Its subcellular location is the cytoplasm. The enzyme catalyses dUMP + (6R)-5,10-methylene-5,6,7,8-tetrahydrofolate = 7,8-dihydrofolate + dTMP. It functions in the pathway pyrimidine metabolism; dTTP biosynthesis. In terms of biological role, catalyzes the reductive methylation of 2'-deoxyuridine-5'-monophosphate (dUMP) to 2'-deoxythymidine-5'-monophosphate (dTMP) while utilizing 5,10-methylenetetrahydrofolate (mTHF) as the methyl donor and reductant in the reaction, yielding dihydrofolate (DHF) as a by-product. This enzymatic reaction provides an intracellular de novo source of dTMP, an essential precursor for DNA biosynthesis. This is Thymidylate synthase from Legionella pneumophila (strain Corby).